The following is a 270-amino-acid chain: 3-phenylpropionate-dihydrodiol/cinnamic acid-dihydrodiol dehydrogenase (270 aa).

10–34 (FITGGGSGLGLALVERFIEEGAQVA) is an NAD(+) binding site. Ser143 is a binding site for substrate. Tyr156 (proton acceptor) is an active-site residue.

It belongs to the short-chain dehydrogenases/reductases (SDR) family.

The catalysed reaction is 3-(cis-5,6-dihydroxycyclohexa-1,3-dien-1-yl)propanoate + NAD(+) = 3-(2,3-dihydroxyphenyl)propanoate + NADH + H(+). It carries out the reaction (2E)-3-(cis-5,6-dihydroxycyclohexa-1,3-dien-1-yl)prop-2-enoate + NAD(+) = (2E)-3-(2,3-dihydroxyphenyl)prop-2-enoate + NADH + H(+). Its pathway is aromatic compound metabolism; 3-phenylpropanoate degradation. Converts 3-phenylpropionate-dihydrodiol (PP-dihydrodiol) and cinnamic acid-dihydrodiol (CI-dihydrodiol) into 3-(2,3-dihydroxylphenyl)propanoic acid (DHPP) and 2,3-dihydroxicinnamic acid (DHCI), respectively. The chain is 3-phenylpropionate-dihydrodiol/cinnamic acid-dihydrodiol dehydrogenase from Shigella flexneri serotype 5b (strain 8401).